A 2527-amino-acid polypeptide reads, in one-letter code: Highly reducing polyketide synthase poxF (2527 aa).

In terms of domain architecture, Ketosynthase family 3 (KS3) spans 20–445 (VMPIAIIGMA…GANAHVIVES (426 aa)). Catalysis depends on for beta-ketoacyl synthase activity residues Cys193, His328, and His368. The tract at residues 560–882 (VFTGQGAQWF…TYASCLSRGQ (323 aa)) is malonyl-CoA:ACP transacylase (MAT) domain. The N-terminal hotdog fold stretch occupies residues 951 to 1086 (HDLLGVPAAG…GLCCTPSPAQ (136 aa)). The dehydratase (DH) domain stretch occupies residues 951-1243 (HDLLGVPAAG…SVRVINNAGT (293 aa)). The PKS/mFAS DH domain occupies 951–1270 (HDLLGVPAAG…CQSLGSSAVV (320 aa)). His983 serves as the catalytic Proton acceptor; for dehydratase activity. The interval 1108–1270 (AWRILNPADT…CQSLGSSAVV (163 aa)) is C-terminal hotdog fold. Residue Asp1174 is the Proton donor; for dehydratase activity of the active site. The interval 1406–1587 (EDQAEWSSVS…RLLAKAGFEP (182 aa)) is methyltransferase (CMet) domain. Positions 1823–2137 (GLLNSLVFTE…TGKHMGKIVL (315 aa)) are enoyl reductase (ER) (ER) domain. The tract at residues 2162-2339 (TYLLVGGVGG…AVSIDLGMVS (178 aa)) is ketoreductase (KR) domain. Positions 2445 to 2522 (EVTTLIQSAL…GLAGQMAKKS (78 aa)) constitute a Carrier domain. An O-(pantetheine 4'-phosphoryl)serine modification is found at Ser2482.

It participates in secondary metabolite biosynthesis. Functionally, highly reducing polyketide synthase; part of the gene cluster that mediates the biosynthesis of oxaleimides, cytotoxic compounds containing an unusual disubstituted succinimide moiety. The first step of the pathway is provided by the HR-PKS poxF that serves in a new mode of collaborative biosynthesis with the PKS-NRPS poxE, by providing the olefin containing amino acid substrate via the synthesis of an ACP-bound dec-4-enoate. The cytochrome P450 monooxygenase poxM-catalyzed oxidation at the alpha-position creates the enzyme-bound 2-hydroxydec-4-enoyl-ACP thioester, which may be prone to spontaneous hydrolysis to yield 2-hydroxydec-4-enoic acid due to increased electrophilicity of the carbonyl. 2-hydroxydec-4-enoic acid can then be further oxidized by poxM to yield the alpha-ketoacid 2-oxodec-4-enoicacid, which is reductively aminated by the aminotransferase poxL to yield (S,E)-2-aminodec-4-enoic acid. The Hybrid PKS-NRPS synthetase poxE then performs condensation between the octaketide product of its PKS modules and the amino group of (S,E)-2-aminodec-4-enoic acid which is activated and incorporated by the adenylation domain. The resulting aminoacyl product can be cyclized by the Diels-Alderase PoxQ and reductively released by the reductive (R) domain of poxE to yield an aldehyde intermediate. The released aldehyde is then substrate for a Knoevenagel condensation by the hydrolyase poxO followed by an oxidation at the 5-position of the pyrrolidone ring. The presence of the olefin from the amino acid building block allows for migration of the substituted allyl group to occur. This allylic transposition reaction takes place in a conjugate addition, semipinacol-like fashion to yield a succinimide intermediate. Iterative two-electron oxidations of the C7 methyl of the succinimide intermediate to the carboxylic acid can be catalyzed by one of two remaining cytochrome P450 monooxygenasess poxC or poxD to yield oxaleimide A. Subsequent oxidation yields the maleimide scaffold oxaleimide I. Both oxaleimide A and oxaleimide I can undergo oxidative modifications in the decalin ring to yield the series of products oxaleimides B to H. The polypeptide is Highly reducing polyketide synthase poxF (Penicillium oxalicum).